A 322-amino-acid polypeptide reads, in one-letter code: Cysteine synthase (322 aa).

Positions 8 and 35 each coordinate hydrogen sulfide. Lys42 is subject to N6-(pyridoxal phosphate)lysine. Pyridoxal 5'-phosphate is bound by residues Asn72 and 177–181 (GTGGT). Leu269 is a binding site for hydrogen sulfide. Ser273 lines the pyridoxal 5'-phosphate pocket.

This sequence belongs to the cysteine synthase/cystathionine beta-synthase family. As to quaternary structure, homodimer. The cofactor is pyridoxal 5'-phosphate.

The enzyme catalyses O-acetyl-L-serine + hydrogen sulfide = L-cysteine + acetate. It functions in the pathway amino-acid biosynthesis; L-cysteine biosynthesis; L-cysteine from L-serine: step 2/2. The sequence is that of Cysteine synthase (cysK) from Buchnera aphidicola subsp. Schizaphis graminum (strain Sg).